We begin with the raw amino-acid sequence, 481 residues long: Glucan endo-1,3-beta-glucosidase 8 (481 aa).

An N-terminal signal peptide occupies residues 1-33 (MSNLLALVVGFVIVIGHLGILVNGLGVNWGTMA). 2 N-linked (GlcNAc...) asparagine glycosylation sites follow: N99 and N110. Catalysis depends on E119, which acts as the Proton donor. N-linked (GlcNAc...) asparagine glycans are attached at residues N126 and N131. E265 acts as the Nucleophile in catalysis. The cysteines at positions 367 and 428 are disulfide-linked. 2 N-linked (GlcNAc...) asparagine glycosylation sites follow: N409 and N440. S455 carries the GPI-anchor amidated serine lipid modification. Residues 456–481 (SASSFSCSSYSLVVLIVWFLLSGMMF) constitute a propeptide, removed in mature form.

It belongs to the glycosyl hydrolase 17 family. Contains two additional disulfide bonds.

Its subcellular location is the secreted. The protein localises to the cell wall. It is found in the cell membrane. It catalyses the reaction Hydrolysis of (1-&gt;3)-beta-D-glucosidic linkages in (1-&gt;3)-beta-D-glucans.. This chain is Glucan endo-1,3-beta-glucosidase 8, found in Arabidopsis thaliana (Mouse-ear cress).